The sequence spans 188 residues: Adenine phosphoribosyltransferase (188 aa).

The protein belongs to the purine/pyrimidine phosphoribosyltransferase family. Homodimer.

The protein localises to the cytoplasm. The catalysed reaction is AMP + diphosphate = 5-phospho-alpha-D-ribose 1-diphosphate + adenine. Its pathway is purine metabolism; AMP biosynthesis via salvage pathway; AMP from adenine: step 1/1. Catalyzes a salvage reaction resulting in the formation of AMP, that is energically less costly than de novo synthesis. This is Adenine phosphoribosyltransferase from Neisseria meningitidis serogroup B (strain ATCC BAA-335 / MC58).